The chain runs to 440 residues: GTPase Der (440 aa).

2 consecutive EngA-type G domains span residues 5–167 (ATVA…PEQE) and 178–353 (IMLS…KEHS). GTP contacts are provided by residues 11–18 (GRPNVGKS), 58–62 (DTGGI), 120–123 (NKSE), 184–191 (GRPNVGKS), 231–235 (DTAGL), and 296–299 (NKWD). One can recognise a KH-like domain in the interval 354–438 (KRITTADVNR…PIRILERVKQ (85 aa)).

Belongs to the TRAFAC class TrmE-Era-EngA-EngB-Septin-like GTPase superfamily. EngA (Der) GTPase family. As to quaternary structure, associates with the 50S ribosomal subunit.

Its function is as follows. GTPase that plays an essential role in the late steps of ribosome biogenesis. This is GTPase Der from Natranaerobius thermophilus (strain ATCC BAA-1301 / DSM 18059 / JW/NM-WN-LF).